Reading from the N-terminus, the 408-residue chain is Solute carrier family 35 member F1 (408 aa).

The segment at 1-21 (MIPPEQPQQQLQPPSPAPPNH) is disordered. The next 10 helical transmembrane spans lie at 60–80 (MLIS…IGLT), 94–114 (VFQS…TLAV), 129–147 (WWKY…YLVV), 158–178 (IQLL…FFLL), 186–206 (FIGI…DVLV), 221–241 (LLVL…EYII), 247–267 (VEFL…QLAI), 284–304 (LLYV…PVVI), 311–331 (SVNL…LFLF), and 335–355 (FSGL…LYSS).

The protein belongs to the SLC35F solute transporter family.

The protein resides in the cytoplasmic vesicle. The protein localises to the secretory vesicle. It is found in the synaptic vesicle membrane. Its function is as follows. Putative solute transporter. This chain is Solute carrier family 35 member F1 (SLC35F1), found in Homo sapiens (Human).